The sequence spans 375 residues: Cobalt-precorrin-5B C(1)-methyltransferase (375 aa).

The protein belongs to the CbiD family.

It catalyses the reaction Co-precorrin-5B + S-adenosyl-L-methionine = Co-precorrin-6A + S-adenosyl-L-homocysteine. It functions in the pathway cofactor biosynthesis; adenosylcobalamin biosynthesis; cob(II)yrinate a,c-diamide from sirohydrochlorin (anaerobic route): step 6/10. In terms of biological role, catalyzes the methylation of C-1 in cobalt-precorrin-5B to form cobalt-precorrin-6A. This is Cobalt-precorrin-5B C(1)-methyltransferase from Paracidovorax citrulli (strain AAC00-1) (Acidovorax citrulli).